The primary structure comprises 315 residues: Eukaryotic translation initiation factor 2 subunit 1 (315 aa).

An S1 motif domain is found at 17–88; sequence EDVVMVNVRS…EKGYIDLSKR (72 aa). Ser-49 is subject to Phosphoserine; by HRI. Ser-52 is modified (phosphoserine). N6-acetyllysine is present on Lys-141. The residue at position 158 (Ser-158) is a Phosphoserine. Residues Thr-279 and Thr-281 each carry the phosphothreonine modification. Residues 293 to 315 are disordered; it reads LERENAEVDGDDDAEEMEAKAED. The span at 299-308 shows a compositional bias: acidic residues; that stretch reads EVDGDDDAEE.

The protein belongs to the eIF-2-alpha family. Eukaryotic translation initiation factor 2 eIF2 is a heterotrimeric complex composed of an alpha (EIF2S1), a beta (EIF2S2) and a gamma (EIF2S3) chain. eIF2 is member of the 43S pre-initiation complex (43S PIC). eIF2 forms a complex with at least CELF1/CUGBP1, CALR, CALR3, EIF2S1, EIF2S2, HSP90B1 and HSPA5. Interaction with METAP2 protects EIF2S1 from inhibitory phosphorylation. Interacts with ABCF1. Associates with ribosomes. Interacts with DDX3X in an RNA-independent manner. In terms of processing, phosphorylation at Ser-49 and Ser-52 stabilizes the eIF-2/GDP/eIF2B complex and prevents GDP/GTP exchange reaction, thus impairing the recycling of eIF-2 between successive rounds of initiation and leading to global inhibition of translation, while concomitantly initiating the preferential translation of integrated stress response (ISR)-specific mRNAs. Substrate for at least 4 kinases: EIF2AK1/HRI, EIF2AK2/PKR, EIF2AK3/PERK and EIF2AK4/GCN2. Phosphorylation on Ser-52 by the EIF2AK4/GCN2 protein kinase occurs in response to amino acid starvation and UV irradiation. Phosphorylation at Ser-52 by the EIF2AK3/PERK protein kinase occurs in response to the unfolded protein response. Phosphorylation at Ser-52 by EIF2AK1/HRI in response to mitochondrial damage promotes relocalization to the mitochondrial surface.

Its subcellular location is the cytoplasm. It localises to the stress granule. It is found in the cytosol. The protein localises to the mitochondrion. Activity is regulated by phosphorylation at Ser-49 and Ser-52, which stabilizes the eIF2/GDP/eIF2B complex and prevents the eIF2B-mediated exchange of GDP for GTP, thereby preventing the formation of the 43S pre-initiation complex (43S PIC). This results in the global attenuation of 5' cap-dependent protein synthesis and concomitant translation of ISR-specific mRNAs that contain a short upstream open reading frame (uORF) in their 5' UTR, such as ATF4, ATF5, DDIT3/CHOP and PPP1R15A/GADD34. In terms of biological role, member of the eIF2 complex that functions in the early steps of protein synthesis by forming a ternary complex with GTP and initiator tRNA. This complex binds to a 40S ribosomal subunit, followed by mRNA binding to form a 43S pre-initiation complex. Junction of the 60S ribosomal subunit to form the 80S initiation complex is preceded by hydrolysis of the GTP bound to eIF2 and release of an eIF2-GDP binary complex. In order for eIF2 to recycle and catalyze another round of initiation, the GDP bound to eIF2 must exchange with GTP by way of a reaction catalyzed by eIF2B. EIF2S1/eIF2-alpha is a key component of the integrated stress response (ISR), required for adaptation to various stress: phosphorylation by metabolic-stress sensing protein kinases (EIF2AK1/HRI, EIF2AK2/PKR, EIF2AK3/PERK and EIF2AK4/GCN2) in response to stress converts EIF2S1/eIF2-alpha in a global protein synthesis inhibitor, leading to a attenuation of cap-dependent translation, while concomitantly initiating the preferential translation of ISR-specific mRNAs, such as the transcriptional activators ATF4 and QRICH1, and hence allowing ATF4- and QRICH1-mediated reprogramming. EIF2S1/eIF2-alpha also acts as an activator of mitophagy in response to mitochondrial damage: phosphorylation by EIF2AK1/HRI promotes relocalization to the mitochondrial surface, thereby triggering PRKN-independent mitophagy. This Pongo abelii (Sumatran orangutan) protein is Eukaryotic translation initiation factor 2 subunit 1 (EIF2S1).